Here is a 262-residue protein sequence, read N- to C-terminus: G patch domain-containing protein 11 (262 aa).

3 stretches are compositionally biased toward basic and acidic residues: residues 39–61 (LHKEKDIQNRQKSFKEQEKESRE), 114–127 (EEVKKRKADEELQN), and 136–165 (QHLEKKSIEDFRVRKRTEREERQTQGDLRK). Disordered stretches follow at residues 39–71 (LHKEKDIQNRQKSFKEQEKESREAALQSSIGSQ) and 88–169 (GLGK…SQRA). Residues 41-62 (KEKDIQNRQKSFKEQEKESREA) are a coiled coil. Residues 70-116 (SQNKGFALLQKMGYKAGQGLGKEGAGRVEPVPLNIKTDRGGIGMEEV) form the G-patch domain.

Belongs to the GPATCH11 family.

The protein localises to the chromosome. It is found in the centromere. It localises to the kinetochore. The sequence is that of G patch domain-containing protein 11 (gpatch11) from Danio rerio (Zebrafish).